A 580-amino-acid polypeptide reads, in one-letter code: Phosphatase and actin regulator 1 (580 aa).

Phosphoserine occurs at positions 67 and 78. Thr-104 bears the Phosphothreonine mark. The Nuclear localization signal motif lies at Arg-108 to Lys-129. The RPEL 1 repeat unit spans residues Ala-138–Tyr-163. Residues Glu-331–Val-351 form a disordered region. Over residues Ser-337–Ser-348 the composition is skewed to low complexity. RPEL repeat units lie at residues Asp-422–Thr-447, Thr-460–Asn-485, and Arg-498–Ser-523. The segment at Leu-462 to Arg-494 is disordered. At Ser-467 the chain carries Phosphoserine. The span at Thr-471–Arg-494 shows a compositional bias: basic and acidic residues. Residue Ser-505 is modified to Phosphoserine.

Belongs to the phosphatase and actin regulator family. As to quaternary structure, interacts (via RPEL repeats) with ACTA1 and PPP1CA; ACTA1 and PPP1CA compete for the same binding site. In terms of tissue distribution, selectively expressed in brain. High levels are found in the olfactory tubercle, nucleus accumbens core and shell, caudate-putamen, cerebral cortex, hippocampus and piriform cortex. Moderate to high levels in the olfactory bulb, arcuate and ventromedial hypothalamus, subthalamic nucleus, amygdala, lateral septum, habenula and thalamus. Low expression, if any, in substantia nigra pars compacta/pars reticula and globus pallidus (at protein level).

It is found in the cytoplasm. Its subcellular location is the synapse. It localises to the nucleus. Functionally, binds actin monomers (G actin) and plays a role in multiple processes including the regulation of actin cytoskeleton dynamics, actin stress fibers formation, cell motility and survival, formation of tubules by endothelial cells, and regulation of PPP1CA activity. Involved in the regulation of cortical neuron migration and dendrite arborization. This is Phosphatase and actin regulator 1 (Phactr1) from Rattus norvegicus (Rat).